Consider the following 367-residue polypeptide: MQTLQVDLGERSYPIYIGAGLLDRAECMVPHLAGRQVAVVTNETVAPLYLERLSQTLAGHELTPIVLPDGEAFKHWETLQKIFDGLLEARHDRRTTLIALGGGVVGDMAGFAAACYQRGVDFIQIPTTLLSQVDSSVGGKTGINHPLGKNMIGAFYQPKAVVIDTATLATLPERELSAGLAEVIKYGLICDEPFLGWLETHMAALRALDAAALTEAIARSCAAKARVVGVDERESGVRATLNLGHTFGHAIETHMGYGAWLHGEAVAAGSVMALEMSRRLGWLGEAERDRGIRLLQRAGLPVVPPAQMSADDFLGHMAVDKKVLGGRLRLVLLRRLGEAVVTGDFPHEALQATLDTDYRTLMEQISH.

NAD(+) contacts are provided by residues 69–74 (DGEAFK), 103–107 (GVVGD), 127–128 (TT), Lys-140, Lys-149, and 167–170 (TLAT). Residues Glu-182, His-245, and His-262 each contribute to the Zn(2+) site.

It belongs to the sugar phosphate cyclases superfamily. Dehydroquinate synthase family. The cofactor is Co(2+). It depends on Zn(2+) as a cofactor. Requires NAD(+) as cofactor.

The protein resides in the cytoplasm. The catalysed reaction is 7-phospho-2-dehydro-3-deoxy-D-arabino-heptonate = 3-dehydroquinate + phosphate. The protein operates within metabolic intermediate biosynthesis; chorismate biosynthesis; chorismate from D-erythrose 4-phosphate and phosphoenolpyruvate: step 2/7. In terms of biological role, catalyzes the conversion of 3-deoxy-D-arabino-heptulosonate 7-phosphate (DAHP) to dehydroquinate (DHQ). The polypeptide is 3-dehydroquinate synthase (Azotobacter vinelandii (strain DJ / ATCC BAA-1303)).